Consider the following 478-residue polypeptide: Glutamate--tRNA ligase 1 (478 aa).

The 'HIGH' region signature appears at 10–20; that stretch reads PSPTGFLHIGG. The 'KMSKS' region motif lies at 242–246; sequence KLSKR. Lys245 contacts ATP.

This sequence belongs to the class-I aminoacyl-tRNA synthetase family. Glutamate--tRNA ligase type 1 subfamily. As to quaternary structure, monomer.

It is found in the cytoplasm. It carries out the reaction tRNA(Glu) + L-glutamate + ATP = L-glutamyl-tRNA(Glu) + AMP + diphosphate. Its function is as follows. Catalyzes the attachment of glutamate to tRNA(Glu) in a two-step reaction: glutamate is first activated by ATP to form Glu-AMP and then transferred to the acceptor end of tRNA(Glu). This Orientia tsutsugamushi (strain Boryong) (Rickettsia tsutsugamushi) protein is Glutamate--tRNA ligase 1.